A 535-amino-acid chain; its full sequence is Pentatricopeptide repeat-containing protein At5g16420, mitochondrial (535 aa).

The N-terminal 28 residues, 1 to 28, are a transit peptide targeting the mitochondrion; sequence MFLSRVNPTRFPPFVASRRLFSASASAA. PPR repeat units follow at residues 82–112, 119–153, 154–189, 190–224, 225–259, 260–294, 295–329, 330–364, 365–395, 399–433, 434–468, and 469–503; these read NYDT…LRNS, GENL…GVKR, SVRS…GITP, NIFT…GLVP, NLVT…GWYP, DATT…EIEP, NEVT…SFMP, DSSL…NCMP, DNAL…FEKG, SLLT…KCKP, NAFT…GCFP, and NKTT…GKVD.

This sequence belongs to the PPR family. P subfamily.

Its subcellular location is the mitochondrion. This is Pentatricopeptide repeat-containing protein At5g16420, mitochondrial from Arabidopsis thaliana (Mouse-ear cress).